Consider the following 290-residue polypeptide: Formamidopyrimidine-DNA glycosylase (290 aa).

The active-site Schiff-base intermediate with DNA is Pro2. Glu3 functions as the Proton donor in the catalytic mechanism. Lys58 (proton donor; for beta-elimination activity) is an active-site residue. 3 residues coordinate DNA: His98, Arg126, and Arg171. The FPG-type zinc-finger motif lies at 256 to 290; that stretch reads FVYDRAGLPCRVCATPVRQIVQGQRSTFYCPKCQH. Arg280 serves as the catalytic Proton donor; for delta-elimination activity.

Belongs to the FPG family. Monomer. Zn(2+) is required as a cofactor.

The catalysed reaction is Hydrolysis of DNA containing ring-opened 7-methylguanine residues, releasing 2,6-diamino-4-hydroxy-5-(N-methyl)formamidopyrimidine.. It carries out the reaction 2'-deoxyribonucleotide-(2'-deoxyribose 5'-phosphate)-2'-deoxyribonucleotide-DNA = a 3'-end 2'-deoxyribonucleotide-(2,3-dehydro-2,3-deoxyribose 5'-phosphate)-DNA + a 5'-end 5'-phospho-2'-deoxyribonucleoside-DNA + H(+). Involved in base excision repair of DNA damaged by oxidation or by mutagenic agents. Acts as a DNA glycosylase that recognizes and removes damaged bases. Has a preference for oxidized purines, such as 7,8-dihydro-8-oxoguanine (8-oxoG). Has AP (apurinic/apyrimidinic) lyase activity and introduces nicks in the DNA strand. Cleaves the DNA backbone by beta-delta elimination to generate a single-strand break at the site of the removed base with both 3'- and 5'-phosphates. This is Formamidopyrimidine-DNA glycosylase from Cupriavidus taiwanensis (strain DSM 17343 / BCRC 17206 / CCUG 44338 / CIP 107171 / LMG 19424 / R1) (Ralstonia taiwanensis (strain LMG 19424)).